Here is a 66-residue protein sequence, read N- to C-terminus: Large ribosomal subunit protein bL33c (66 aa).

Belongs to the bacterial ribosomal protein bL33 family.

Its subcellular location is the plastid. It localises to the chloroplast. In Saccharum officinarum (Sugarcane), this protein is Large ribosomal subunit protein bL33c.